Here is a 176-residue protein sequence, read N- to C-terminus: Large ribosomal subunit protein uL10 (176 aa).

The protein belongs to the universal ribosomal protein uL10 family. In terms of assembly, part of the ribosomal stalk of the 50S ribosomal subunit. The N-terminus interacts with L11 and the large rRNA to form the base of the stalk. The C-terminus forms an elongated spine to which L12 dimers bind in a sequential fashion forming a multimeric L10(L12)X complex.

Forms part of the ribosomal stalk, playing a central role in the interaction of the ribosome with GTP-bound translation factors. The sequence is that of Large ribosomal subunit protein uL10 from Coprothermobacter proteolyticus (strain ATCC 35245 / DSM 5265 / OCM 4 / BT).